A 95-amino-acid polypeptide reads, in one-letter code: Large ribosomal subunit protein uL23 (95 aa).

The protein belongs to the universal ribosomal protein uL23 family. In terms of assembly, part of the 50S ribosomal subunit. Contacts protein L29, and trigger factor when it is bound to the ribosome.

One of the early assembly proteins it binds 23S rRNA. One of the proteins that surrounds the polypeptide exit tunnel on the outside of the ribosome. Forms the main docking site for trigger factor binding to the ribosome. This is Large ribosomal subunit protein uL23 from Geobacillus thermodenitrificans (strain NG80-2).